The primary structure comprises 32 residues: Hainantoxin F8-35.23 (32 aa).

In terms of tissue distribution, expressed by the venom gland.

It localises to the secreted. The polypeptide is Hainantoxin F8-35.23 (Cyriopagopus hainanus (Chinese bird spider)).